The chain runs to 342 residues: Methyltransferase ungE' (342 aa).

This sequence belongs to the methyltransferase superfamily.

It participates in secondary metabolite biosynthesis. Methyltransferase; part of the gene cluster that mediates the biosynthesis of the unguisins, gamma-aminobutyric acid (GABA)-containing fungal cyclic heptapeptides with the amino acid sequence cyclo-(D-Ala1-D-Val2-L-Leu3-beta-MePhe4-D-Ala5-D-Trp6-GABA7) for unguisin H and cyclo-(D-Ala1-D-Ala2-L-Leu3-beta-MePhe4-D-Ala5-D-Trp6-GABA7) for unguisin I. Within the pathway, the methyltransferase ungE' is probably involved in the synthesis of the (2R,3R)-beta-methylphenylalanine residue incorporated by the module 4 of the nonribosomal peptide synthetase (NRPS) ungA'. The alanine racemase ungC' catalyzes the interconversion of L-alanine and D-alanine, providing the D-alanine which is accepted by the first adenylation domain of ungA'. UngA' is the main enzyme within the cluster which condenses the 7 residues using its respective 7 modules. The terminal condensation domain (Ct) is involved in cyclization with D-alanine and thereby releasing of unguisins H and I. Finally, the hydrolase ungD' catalyzes the hydrolysis between the D-tryptophan and GABA residues of unguisins H and I to produce the corresponding linear peptides. The sequence is that of Methyltransferase ungE' from Aspergillus campestris (strain IBT 28561).